The chain runs to 45 residues: MKVLSSLKSAKSRHKDCQIVKRKGRVFVICKTNPRFKAVQGKKKK.

The protein belongs to the bacterial ribosomal protein bL36 family.

The chain is Large ribosomal subunit protein bL36 from Aliivibrio salmonicida (strain LFI1238) (Vibrio salmonicida (strain LFI1238)).